Reading from the N-terminus, the 458-residue chain is GTPase Der (458 aa).

EngA-type G domains follow at residues 4–169 (PSIA…PKDL) and 178–353 (IMMS…TQHR). GTP-binding positions include 10–17 (GRPNVGKS), 57–61 (DTGGL), 120–123 (NKCE), 184–191 (GRPNVGKS), 231–235 (DTAGI), and 296–299 (NKWD). Positions 354 to 439 (RRVTTSVVNE…PIILLWRGKQ (86 aa)) constitute a KH-like domain.

The protein belongs to the TRAFAC class TrmE-Era-EngA-EngB-Septin-like GTPase superfamily. EngA (Der) GTPase family. Associates with the 50S ribosomal subunit.

Its function is as follows. GTPase that plays an essential role in the late steps of ribosome biogenesis. This is GTPase Der from Prochlorococcus marinus subsp. pastoris (strain CCMP1986 / NIES-2087 / MED4).